The primary structure comprises 669 residues: PDF receptor (669 aa).

Residues 1–244 (MTLLSNILDC…DIARRTRTLE (244 aa)) lie on the Extracellular side of the membrane. Residues 24–52 (RQSGSSGPSPSAPTAGTFESKSMLEPTSS) form a disordered region. Residues 26–40 (SGSSGPSPSAPTAGT) show a composition bias toward low complexity. N-linked (GlcNAc...) asparagine glycans are attached at residues Asn111, Asn117, Asn130, Asn137, Asn148, and Asn198. A helical transmembrane segment spans residues 245-265 (IVGLCLSLFALIVSLLIFCTF). Residues 266–274 (RSLRNNRTK) are Cytoplasmic-facing. A helical membrane pass occupies residues 275–295 (IHKNLFVAMVLQVIIRLTLYL). Topologically, residues 296–334 (DQFRRGNKEAATNTSLSVIENTPYLCEASYVLLEYARTA) are extracellular. N-linked (GlcNAc...) asparagine glycosylation occurs at Asn308. Residues 335-355 (MFMWMFIEGLYLHNMVTVAVF) traverse the membrane as a helical segment. The Cytoplasmic portion of the chain corresponds to 356 to 366 (QGSFPLKFFSR). The chain crosses the membrane as a helical span at residues 367 to 387 (LGWCVPILMTTVWARCTVMYM). The Extracellular portion of the chain corresponds to 388-411 (DTSLGECLWNYNLTPYYWILEGPR). A helical transmembrane segment spans residues 412–432 (LAVILLNFCFLVNIIRVLVMK). Topologically, residues 433–449 (LRQSQASDIEQTRKAVR) are cytoplasmic. The chain crosses the membrane as a helical span at residues 450 to 470 (AAIVLLPLLGITNLLHQLAPL). The Extracellular portion of the chain corresponds to 471 to 480 (KTATNFAVWS). A helical membrane pass occupies residues 481–501 (YGTHFLTSFQGFFIALIYCFL). Topologically, residues 502-669 (NGEVRAVLLK…ESVVFELSEQ (168 aa)) are cytoplasmic. Disordered regions lie at residues 536–573 (AYNTAPDTDAVQPAGDPSATGKRISPPNKRLNGRKPSS) and 590–614 (PRLQNKAREKGKDRVEKTDAEAEPD). Basic and acidic residues predominate over residues 595 to 609 (KAREKGKDRVEKTDA).

It belongs to the G-protein coupled receptor 2 family. In terms of tissue distribution, mainly present in clock neurons of the brain. Localizes in all 4 s-LNv neurons, 1 LNd neuron, 7 DN1 neurons, and 1 DN3 neuron. In addition to the clock neurons, it is also present in approximately 13 pairs of neurons along the ventral nerve cord in third instar larvae, which do not overlap with dopaminergic or serotonergic neurons. Not present in DN2 neurons (at protein level).

The protein localises to the cell membrane. Its function is as follows. Receptor for PDF, a neuropeptide controlling circadian behavioral rhythms. Probably regulates circadian behavioral rhythms through coordination of activities of clock neurons. PDF-binding results in the elevation of cAMP synthesis. Plays a role in sleep regulation and regulates the state transition from sleep to wake. In Drosophila melanogaster (Fruit fly), this protein is PDF receptor.